The following is a 226-amino-acid chain: 7-cyano-7-deazaguanine synthase (226 aa).

Leu12 to Val22 is a binding site for ATP. Residues Cys191, Cys201, Cys204, and Cys207 each coordinate Zn(2+).

Belongs to the QueC family. It depends on Zn(2+) as a cofactor.

It catalyses the reaction 7-carboxy-7-deazaguanine + NH4(+) + ATP = 7-cyano-7-deazaguanine + ADP + phosphate + H2O + H(+). It functions in the pathway purine metabolism; 7-cyano-7-deazaguanine biosynthesis. Catalyzes the ATP-dependent conversion of 7-carboxy-7-deazaguanine (CDG) to 7-cyano-7-deazaguanine (preQ(0)). The chain is 7-cyano-7-deazaguanine synthase from Pseudomonas syringae pv. tomato (strain ATCC BAA-871 / DC3000).